The chain runs to 302 residues: Ribostamycin:4-(gamma-L-glutamylamino)-(S)-2-hydroxybutanoyl-[BtrI acyl-carrier protein] 4-(gamma-L-glutamylamino)-(S)-2-hydroxybutanoate transferase (302 aa).

The catalysed reaction is 4-(gamma-L-glutamylamino)-(2S)-2-hydroxybutanoyl-[BtrI ACP] + ribostamycin = gamma-L-glutamyl-butirosin B + holo-[BtrI ACP] + H(+). The protein operates within antibiotic biosynthesis; butirosin biosynthesis. In terms of biological role, aminoglycoside acyltransferase that attaches the (S)-4-amino-2-hydroxybutyrate (AHBA) side chain from the acyl carrier protein BtrI to the aminoglycoside ribostamycin in the biosynthetic pathway of butirosin. The AHBA side chain protects the antibiotic from several common resistance mechanisms. The polypeptide is Ribostamycin:4-(gamma-L-glutamylamino)-(S)-2-hydroxybutanoyl-[BtrI acyl-carrier protein] 4-(gamma-L-glutamylamino)-(S)-2-hydroxybutanoate transferase (btrH) (Niallia circulans (Bacillus circulans)).